Reading from the N-terminus, the 94-residue chain is Protein SKIP34 (94 aa).

A disordered region spans residues 1-27; the sequence is MCYGHNQSLSSRSSLRRRSHDGEDDSV. A coiled-coil region spans residues 23-61; sequence EDDSVVDDLRDRLAETEARLRRARAREAELSRRLEHMKR.

In terms of assembly, interacts with SPK1B/ASK2.

The protein is Protein SKIP34 (SKIP34) of Arabidopsis thaliana (Mouse-ear cress).